We begin with the raw amino-acid sequence, 337 residues long: Protein BIG GRAIN 1-like (337 aa).

3 disordered regions span residues 1–32, 120–163, and 179–233; these read MRDMEMRWAAPAPATRGRGRARRRAPDQPSFS, SAAG…RPAS, and KRPS…ARPS. Residues 137–146 are compositionally biased toward basic and acidic residues; the sequence is HEQPDVEKTA. Composition is skewed to low complexity over residues 150–163, 195–209, and 219–230; these read PGSASARACRRPAS, PACSTAPPSSSSSYA, and RTPPTTTTTARA.

This sequence belongs to the BIG GRAIN 1 (BG1) plant protein family.

It is found in the cell membrane. Involved in auxin transport. Regulator of the auxin signaling pathway. This Oryza sativa subsp. indica (Rice) protein is Protein BIG GRAIN 1-like.